Here is a 517-residue protein sequence, read N- to C-terminus: Serine hydroxymethyltransferase 2, mitochondrial (517 aa).

The transit peptide at 1-31 (MAMASALRRLSSSSNKPLQRLFNGGHLYSMS) directs the protein to the mitochondrion. The residue at position 287 (lysine 287) is an N6-(pyridoxal phosphate)lysine.

It belongs to the SHMT family. In terms of assembly, homotetramer. Pyridoxal 5'-phosphate is required as a cofactor.

The protein resides in the mitochondrion. It carries out the reaction (6R)-5,10-methylene-5,6,7,8-tetrahydrofolate + glycine + H2O = (6S)-5,6,7,8-tetrahydrofolate + L-serine. The protein operates within one-carbon metabolism; tetrahydrofolate interconversion. Functionally, catalyzes the interconversion of serine and glycine. In Flaveria pringlei, this protein is Serine hydroxymethyltransferase 2, mitochondrial.